The chain runs to 352 residues: Alanine racemase (352 aa).

K34 serves as the catalytic Proton acceptor; specific for D-alanine. K34 bears the N6-(pyridoxal phosphate)lysine mark. Position 126 (R126) interacts with substrate. Y248 functions as the Proton acceptor; specific for L-alanine in the catalytic mechanism. M296 serves as a coordination point for substrate.

This sequence belongs to the alanine racemase family. Pyridoxal 5'-phosphate is required as a cofactor.

It carries out the reaction L-alanine = D-alanine. It functions in the pathway amino-acid biosynthesis; D-alanine biosynthesis; D-alanine from L-alanine: step 1/1. Catalyzes the interconversion of L-alanine and D-alanine. May also act on other amino acids. The polypeptide is Alanine racemase (alr) (Deinococcus deserti (strain DSM 17065 / CIP 109153 / LMG 22923 / VCD115)).